A 153-amino-acid chain; its full sequence is Histone H2A.Z-specific chaperone CHZ1 (153 aa).

The span at 1 to 29 shows a compositional bias: basic and acidic residues; that stretch reads MSDEAKEKRELESQKESSHNKSEKSVEPK. Residues 1–153 are disordered; that stretch reads MSDEAKEKRE…EDEEDDDFKE (153 aa). Ser-2 carries the post-translational modification N-acetylserine. Over residues 56 to 65 the composition is skewed to polar residues; that stretch reads LTKSENNGTV. Ser-68 and Ser-70 each carry phosphoserine. Residues 84 to 94 are compositionally biased toward acidic residues; it reads EGEEEEDDLAE. Residues 87-108 are important for H2A.Z-H2B binding; it reads EEEDDLAEIDTSNIITSGRRTR. The segment covering 110–138 has biased composition (basic and acidic residues); that stretch reads KVIDYKKTAEELDKKEPSTGSKDDVGYGE. The span at 139-153 shows a compositional bias: acidic residues; sequence KEEDDEDEEDDDFKE.

It belongs to the CHZ1 family. In terms of assembly, forms a heterotrimer with H2A.Z-H2B, stabilizing the association of the histone dimer. Also, with a lower affinity, forms a heterotrimer with H2A-H2B.

The protein localises to the nucleus. Functionally, forms a chaperone-bound H2A.Z-H2B complex that acts as a source for SWR1 complex-dependent H2A to H2A.Z histone replacement in chromatin. In Saccharomyces cerevisiae (strain ATCC 204508 / S288c) (Baker's yeast), this protein is Histone H2A.Z-specific chaperone CHZ1 (CHZ1).